A 462-amino-acid chain; its full sequence is Glycoprotein endo-alpha-1,2-mannosidase (462 aa).

The Cytoplasmic portion of the chain corresponds to 1 to 9 (MAKFRRRTC). Residues 10 to 30 (IILSLFIVFIFSLMMGLKMLW) traverse the membrane as a helical; Signal-anchor for type II membrane protein segment. At 31-462 (PNAASFGPPF…YALDQQLPAS (432 aa)) the chain is on the lumenal side. Positions 60–462 (DFQRSDRIDM…YALDQQLPAS (403 aa)) are catalytic.

Belongs to the glycosyl hydrolase 99 family. Undergoes proteolytic cleavage in the C-terminal region. As to expression, highly expressed in the liver and kidney.

Its subcellular location is the golgi apparatus membrane. The enzyme catalyses N-{alpha-Glc-(1-&gt;3)-alpha-Man-(1-&gt;2)-alpha-Man-(1-&gt;2)-alpha-Man-(1-&gt;3)-[alpha-Man-(1-&gt;2)-alpha-Man-(1-&gt;3)-[alpha-Man-(1-&gt;2)-alpha-Man-(1-&gt;6)]-alpha-Man-(1-&gt;6)]-beta-Man-(1-&gt;4)-beta-GlcNAc-(1-&gt;4)-beta-GlcNAc}-L-asparaginyl-[protein] + H2O = alpha-D-glucosyl-(1-&gt;3)-D-mannopyranose + N(4)-{alpha-D-Man-(1-&gt;2)-alpha-D-Man-(1-&gt;3)-[alpha-D-Man-(1-&gt;2)-alpha-D-Man-(1-&gt;3)-[alpha-D-Man-(1-&gt;2)-alpha-D-Man-(1-&gt;6)]-alpha-D-Man-(1-&gt;6)]-beta-D-Man-(1-&gt;4)-beta-D-GlaNAc-(1-&gt;4)-beta-D-GlcNAc}-L-asparaginyl-[protein] (N-glucan mannose isomer 8A1,2,3B1,2). This Rattus norvegicus (Rat) protein is Glycoprotein endo-alpha-1,2-mannosidase (Manea).